The primary structure comprises 360 residues: Photosystem II protein D1 2 (360 aa).

The next 3 membrane-spanning stretches (helical) occupy residues 29-46 (YIGWFGVLMIPTLLTAVT), 118-133 (HYMIGCICYLGRQWEY), and 142-156 (WICVAYSAPLAATYS). Chlorophyll a is bound at residue H118. Y126 is a pheophytin a binding site. [CaMn4O5] cluster-binding residues include D170 and E189. A helical membrane pass occupies residues 197 to 218 (FHMFGVAGVLGGSLFAAMHGSL). H198 lines the chlorophyll a pocket. Residues H215 and 264–265 (SF) contribute to the a quinone site. Residue H215 participates in Fe cation binding. H272 lines the Fe cation pocket. The helical transmembrane segment at 274-288 (FLGAWPVVCIWLTAM) threads the bilayer. [CaMn4O5] cluster-binding residues include H332, E333, D342, and A344. Residues 345 to 360 (AGESAPVALTAPVING) constitute a propeptide that is removed on maturation.

This sequence belongs to the reaction center PufL/M/PsbA/D family. In terms of assembly, PSII is composed of 1 copy each of membrane proteins PsbA, PsbB, PsbC, PsbD, PsbE, PsbF, PsbH, PsbI, PsbJ, PsbK, PsbL, PsbM, PsbT, PsbX, PsbY, PsbZ, Psb30/Ycf12, peripheral proteins PsbO, CyanoQ (PsbQ), PsbU, PsbV and a large number of cofactors. It forms dimeric complexes. The D1/D2 heterodimer binds P680, chlorophylls that are the primary electron donor of PSII, and subsequent electron acceptors. It shares a non-heme iron and each subunit binds pheophytin, quinone, additional chlorophylls, carotenoids and lipids. D1 provides most of the ligands for the Mn4-Ca-O5 cluster of the oxygen-evolving complex (OEC). There is also a Cl(-1) ion associated with D1 and D2, which is required for oxygen evolution. The PSII complex binds additional chlorophylls, carotenoids and specific lipids. serves as cofactor. Tyr-161 forms a radical intermediate that is referred to as redox-active TyrZ, YZ or Y-Z. Post-translationally, C-terminally processed by CtpA; processing is essential to allow assembly of the oxygen-evolving complex and thus photosynthetic growth.

It is found in the cellular thylakoid membrane. The catalysed reaction is 2 a plastoquinone + 4 hnu + 2 H2O = 2 a plastoquinol + O2. Photosystem II (PSII) is a light-driven water:plastoquinone oxidoreductase that uses light energy to abstract electrons from H(2)O, generating O(2) and a proton gradient subsequently used for ATP formation. It consists of a core antenna complex that captures photons, and an electron transfer chain that converts photonic excitation into a charge separation. The D1/D2 (PsbA/PsbD) reaction center heterodimer binds P680, the primary electron donor of PSII as well as several subsequent electron acceptors. The chain is Photosystem II protein D1 2 from Acaryochloris marina (strain MBIC 11017).